The chain runs to 293 residues: tRNA pseudouridine synthase B (293 aa).

Catalysis depends on Asp-39, which acts as the Nucleophile.

It belongs to the pseudouridine synthase TruB family. Type 1 subfamily.

The enzyme catalyses uridine(55) in tRNA = pseudouridine(55) in tRNA. Its function is as follows. Responsible for synthesis of pseudouridine from uracil-55 in the psi GC loop of transfer RNAs. This chain is tRNA pseudouridine synthase B, found in Streptococcus thermophilus (strain CNRZ 1066).